The chain runs to 301 residues: N-acetylmuramic acid 6-phosphate etherase (301 aa).

The region spanning 55 to 215 is the SIS domain; it reads IADALRAGGR…STISMVALGK (161 aa). Glu83 serves as the catalytic Proton donor. Glu111 is a catalytic residue.

This sequence belongs to the GCKR-like family. MurNAc-6-P etherase subfamily. In terms of assembly, homodimer.

The enzyme catalyses N-acetyl-D-muramate 6-phosphate + H2O = N-acetyl-D-glucosamine 6-phosphate + (R)-lactate. It participates in amino-sugar metabolism; 1,6-anhydro-N-acetylmuramate degradation. The protein operates within amino-sugar metabolism; N-acetylmuramate degradation. Its pathway is cell wall biogenesis; peptidoglycan recycling. Specifically catalyzes the cleavage of the D-lactyl ether substituent of MurNAc 6-phosphate, producing GlcNAc 6-phosphate and D-lactate. Together with AnmK, is also required for the utilization of anhydro-N-acetylmuramic acid (anhMurNAc) either imported from the medium or derived from its own cell wall murein, and thus plays a role in cell wall recycling. This chain is N-acetylmuramic acid 6-phosphate etherase, found in Burkholderia lata (strain ATCC 17760 / DSM 23089 / LMG 22485 / NCIMB 9086 / R18194 / 383).